We begin with the raw amino-acid sequence, 914 residues long: Probable dipeptidyl-aminopeptidase B (914 aa).

The span at 1-10 (MGKSEADEDA) shows a compositional bias: acidic residues. The segment at 1-81 (MGKSEADEDA…DQPFLPSRKG (81 aa)) is disordered. Over 1 to 89 (MGKSEADEDA…KGSGARARRV (89 aa)) the chain is Cytoplasmic. Residues 20–34 (SSSAASQTSSDSGLS) show a composition bias toward low complexity. The helical; Signal-anchor for type II membrane protein transmembrane segment at 90 to 110 (FWGLLLLCLAGWVLAFVLFLI) threads the bilayer. Topologically, residues 111 to 914 (QGRSGYSATS…FKRALPVFVH (804 aa)) are vacuolar. 2 N-linked (GlcNAc...) asparagine glycosylation sites follow: Asn-347 and Asn-638. Ser-752 functions as the Charge relay system in the catalytic mechanism. The N-linked (GlcNAc...) asparagine glycan is linked to Asn-806. Active-site charge relay system residues include Asp-829 and His-862.

The protein belongs to the peptidase S9B family.

It is found in the vacuole membrane. It carries out the reaction Release of an N-terminal dipeptide, Xaa-Yaa-|-Zaa-, from a polypeptide, preferentially when Yaa is Pro, provided Zaa is neither Pro nor hydroxyproline.. Type IV dipeptidyl-peptidase which removes N-terminal dipeptides sequentially from polypeptides having unsubstituted N-termini provided that the penultimate residue is proline. The polypeptide is Probable dipeptidyl-aminopeptidase B (dapB) (Aspergillus terreus (strain NIH 2624 / FGSC A1156)).